Reading from the N-terminus, the 351-residue chain is Cytosolic sulfotransferase 9 (351 aa).

Residues 1-11 (MDEKDILRNLR) are compositionally biased toward basic and acidic residues. The segment at 1 to 24 (MDEKDILRNLREEEEEEEENQSEE) is disordered. Residues 12–22 (EEEEEEEENQS) show a composition bias toward acidic residues. 80–85 (KSGTTW) is a binding site for 3'-phosphoadenylyl sulfate. His-152 (proton acceptor) is an active-site residue. Residues Arg-174, Ser-182, Tyr-252, and 317-319 (RKG) contribute to the 3'-phosphoadenylyl sulfate site.

It belongs to the sulfotransferase 1 family. In terms of tissue distribution, expressed in roots and leaves.

It is found in the cytoplasm. Its function is as follows. Sulfotransferase that utilizes 3'-phospho-5'-adenylyl sulfate (PAPS) as sulfonate donor. No activity with brassinosteroids. This Arabidopsis thaliana (Mouse-ear cress) protein is Cytosolic sulfotransferase 9 (STO9).